The sequence spans 364 residues: Phosphoserine aminotransferase (364 aa).

Residue arginine 46 coordinates L-glutamate. Pyridoxal 5'-phosphate is bound by residues 80 to 81, tryptophan 106, threonine 157, aspartate 176, and glutamine 199; that span reads AR. At lysine 200 the chain carries N6-(pyridoxal phosphate)lysine. Position 241 to 242 (241 to 242) interacts with pyridoxal 5'-phosphate; sequence NT.

This sequence belongs to the class-V pyridoxal-phosphate-dependent aminotransferase family. SerC subfamily. In terms of assembly, homodimer. It depends on pyridoxal 5'-phosphate as a cofactor.

It is found in the cytoplasm. The catalysed reaction is O-phospho-L-serine + 2-oxoglutarate = 3-phosphooxypyruvate + L-glutamate. It carries out the reaction 4-(phosphooxy)-L-threonine + 2-oxoglutarate = (R)-3-hydroxy-2-oxo-4-phosphooxybutanoate + L-glutamate. It functions in the pathway amino-acid biosynthesis; L-serine biosynthesis; L-serine from 3-phospho-D-glycerate: step 2/3. The protein operates within cofactor biosynthesis; pyridoxine 5'-phosphate biosynthesis; pyridoxine 5'-phosphate from D-erythrose 4-phosphate: step 3/5. Functionally, catalyzes the reversible conversion of 3-phosphohydroxypyruvate to phosphoserine and of 3-hydroxy-2-oxo-4-phosphonooxybutanoate to phosphohydroxythreonine. The sequence is that of Phosphoserine aminotransferase from Vibrio vulnificus (strain CMCP6).